The chain runs to 424 residues: Enolase (424 aa).

Gln-162 serves as a coordination point for (2R)-2-phosphoglycerate. Residue Glu-204 is the Proton donor of the active site. Mg(2+) is bound by residues Asp-241, Glu-284, and Asp-311. (2R)-2-phosphoglycerate is bound by residues Lys-336, Arg-365, Ser-366, and Lys-387. The active-site Proton acceptor is Lys-336.

Belongs to the enolase family. Mg(2+) serves as cofactor.

Its subcellular location is the cytoplasm. The protein resides in the secreted. It localises to the cell surface. The enzyme catalyses (2R)-2-phosphoglycerate = phosphoenolpyruvate + H2O. It functions in the pathway carbohydrate degradation; glycolysis; pyruvate from D-glyceraldehyde 3-phosphate: step 4/5. Catalyzes the reversible conversion of 2-phosphoglycerate (2-PG) into phosphoenolpyruvate (PEP). It is essential for the degradation of carbohydrates via glycolysis. The polypeptide is Enolase (Rhizobium leguminosarum bv. trifolii (strain WSM2304)).